Consider the following 4265-residue polypeptide: Dynein axonemal heavy chain 1 (4265 aa).

Residues 1–88 (MEQPNSKGYS…KSPLTGTDKK (88 aa)) form a disordered region. Residues 1–1542 (MEQPNSKGYS…YIRAVNAEFI (1542 aa)) form a stem region. Over residues 60 to 69 (PHLPLPPAPP) the composition is skewed to pro residues. 4 AAA regions span residues 1543-1764 (YGYE…VISA), 1824-2057 (EAIR…SSVK), 2189-2449 (TMVP…VFQG), and 2547-2799 (DYNQ…LTRH). A GPAGTGKT motif motif is present at residues 1581–1588 (GPAGTGKT). 1581–1588 (GPAGTGKT) is a binding site for ATP. Positions 1631–1637 (CFDEFNR) match the CFDEFNR motif motif. Residues 1862–1869 (GPTGSGKS), 2227–2234 (GPTGTGKT), and 2586–2593 (GVGGSGRS) each bind ATP. A stalk region spans residues 2814–3112 (FSILIGQKKL…EELELKCEQC (299 aa)). Residues 3074–3122 (LDEAKQRLREVEDGIATMQAKYRECITKKEELELKCEQCEQRLGRAGKL) adopt a coiled-coil conformation. 2 AAA regions span residues 3197-3427 (LGNP…EIQA) and 3640-3859 (MQDF…QLKM).

This sequence belongs to the dynein heavy chain family. In terms of assembly, consists of at least two heavy chains and a number of intermediate and light chains. Expressed primarily in trachea and testis, 2 tissues containing axonemal structures. Also expressed in brain.

Its subcellular location is the cytoplasm. The protein localises to the cytoskeleton. It is found in the cilium axoneme. The protein resides in the cell projection. It localises to the cilium. Its subcellular location is the flagellum. Its function is as follows. Force generating protein of cilia required for sperm flagellum motility. Produces force towards the minus ends of microtubules. Dynein has ATPase activity; the force-producing power stroke is thought to occur on release of ADP. Required in spermatozoa for the formation of the inner dynein arms and biogenesis of the axoneme. The chain is Dynein axonemal heavy chain 1 from Homo sapiens (Human).